Reading from the N-terminus, the 362-residue chain is Peptide chain release factor 1 (362 aa).

Gln235 bears the N5-methylglutamine mark.

This sequence belongs to the prokaryotic/mitochondrial release factor family. In terms of processing, methylated by PrmC. Methylation increases the termination efficiency of RF1.

It localises to the cytoplasm. Peptide chain release factor 1 directs the termination of translation in response to the peptide chain termination codons UAG and UAA. The polypeptide is Peptide chain release factor 1 (Acinetobacter baylyi (strain ATCC 33305 / BD413 / ADP1)).